Reading from the N-terminus, the 243-residue chain is Ribonuclease PH (243 aa).

Phosphate is bound by residues arginine 91 and 129–131 (GTR).

Belongs to the RNase PH family. In terms of assembly, homohexameric ring arranged as a trimer of dimers.

The catalysed reaction is tRNA(n+1) + phosphate = tRNA(n) + a ribonucleoside 5'-diphosphate. Phosphorolytic 3'-5' exoribonuclease that plays an important role in tRNA 3'-end maturation. Removes nucleotide residues following the 3'-CCA terminus of tRNAs; can also add nucleotides to the ends of RNA molecules by using nucleoside diphosphates as substrates, but this may not be physiologically important. Probably plays a role in initiation of 16S rRNA degradation (leading to ribosome degradation) during starvation. This is Ribonuclease PH from Burkholderia thailandensis (strain ATCC 700388 / DSM 13276 / CCUG 48851 / CIP 106301 / E264).